We begin with the raw amino-acid sequence, 177 residues long: Large ribosomal subunit protein uL6 (177 aa).

The protein belongs to the universal ribosomal protein uL6 family. As to quaternary structure, part of the 50S ribosomal subunit.

In terms of biological role, this protein binds to the 23S rRNA, and is important in its secondary structure. It is located near the subunit interface in the base of the L7/L12 stalk, and near the tRNA binding site of the peptidyltransferase center. The chain is Large ribosomal subunit protein uL6 from Stutzerimonas stutzeri (strain A1501) (Pseudomonas stutzeri).